A 630-amino-acid polypeptide reads, in one-letter code: Chaperone protein DnaK (630 aa).

The residue at position 198 (T198) is a Phosphothreonine; by autocatalysis. Residues 604-630 (AAAAPGEEAPKDDDVVDAEFSEVDDKK) are disordered. A compositionally biased stretch (acidic residues) spans 617–630 (DVVDAEFSEVDDKK).

This sequence belongs to the heat shock protein 70 family.

Acts as a chaperone. The protein is Chaperone protein DnaK of Rhizorhabdus wittichii (strain DSM 6014 / CCUG 31198 / JCM 15750 / NBRC 105917 / EY 4224 / RW1) (Sphingomonas wittichii).